Here is a 347-residue protein sequence, read N- to C-terminus: Phenylalanine--tRNA ligase alpha subunit (347 aa).

E262 lines the Mg(2+) pocket.

The protein belongs to the class-II aminoacyl-tRNA synthetase family. Phe-tRNA synthetase alpha subunit type 1 subfamily. In terms of assembly, tetramer of two alpha and two beta subunits. Mg(2+) is required as a cofactor.

Its subcellular location is the cytoplasm. The enzyme catalyses tRNA(Phe) + L-phenylalanine + ATP = L-phenylalanyl-tRNA(Phe) + AMP + diphosphate + H(+). In Roseiflexus castenholzii (strain DSM 13941 / HLO8), this protein is Phenylalanine--tRNA ligase alpha subunit.